The primary structure comprises 301 residues: Ribosomal protein L11 methyltransferase (301 aa).

S-adenosyl-L-methionine-binding residues include T130, G151, D172, and N239.

It belongs to the methyltransferase superfamily. PrmA family.

The protein localises to the cytoplasm. The enzyme catalyses L-lysyl-[protein] + 3 S-adenosyl-L-methionine = N(6),N(6),N(6)-trimethyl-L-lysyl-[protein] + 3 S-adenosyl-L-homocysteine + 3 H(+). Functionally, methylates ribosomal protein L11. This Campylobacter hominis (strain ATCC BAA-381 / DSM 21671 / CCUG 45161 / LMG 19568 / NCTC 13146 / CH001A) protein is Ribosomal protein L11 methyltransferase.